The chain runs to 462 residues: Protoheme IX farnesyltransferase, mitochondrial (462 aa).

Transmembrane regions (helical) follow at residues 152 to 172 (LTILVTLSSICSYAISPYTVS), 173 to 193 (LPELLFLTMGTALCSGAANAI), 237 to 257 (MLFLGVNPTVSFLGFLNIVLY), 269 to 289 (IINTWVGAIVGAIPPLMGWAA), 296 to 316 (PGAWCLAGLLYAWQFPHFNAL), 348 to 368 (SLLMFPLCFGLSYFGITDWVF), and 411 to 431 (AKKLFWGSVWHLPAVLILAML).

It belongs to the UbiA prenyltransferase family.

The protein resides in the mitochondrion membrane. Its function is as follows. Converts protoheme IX and farnesyl diphosphate to heme O. The protein is Protoheme IX farnesyltransferase, mitochondrial (COX10) of Debaryomyces hansenii (strain ATCC 36239 / CBS 767 / BCRC 21394 / JCM 1990 / NBRC 0083 / IGC 2968) (Yeast).